The sequence spans 520 residues: Cytochrome b5 reductase 4 (520 aa).

At M1 the chain carries N-acetylmethionine. Over residues 1–16 the composition is skewed to low complexity; sequence MLNVPSQSFPGPSSQQ. Residues 1 to 27 are disordered; sequence MLNVPSQSFPGPSSQQRVASGGRSKVP. The 77-residue stretch at 54–130 folds into the Cytochrome b5 heme-binding domain; that stretch reads LIEVTEEELK…LKECLVGRMA (77 aa). Residues H89 and H112 each contribute to the heme site. The 92-residue stretch at 164 to 255 folds into the CS domain; that stretch reads PSSPSYDWFQ…KENTSWKCLG (92 aa). Residues 272 to 384 form the FAD-binding FR-type domain; sequence LFYRKCQLVS…SNPEGNFIIS (113 aa). FAD is bound by residues 364-379 and 391-423; these read DQLQ…NPEG and DLFL…KVKL.

The protein belongs to the flavoprotein pyridine nucleotide cytochrome reductase family. FAD serves as cofactor.

The protein localises to the endoplasmic reticulum. The enzyme catalyses 2 Fe(III)-[cytochrome b5] + NADH = 2 Fe(II)-[cytochrome b5] + NAD(+) + H(+). In terms of biological role, NADH-cytochrome b5 reductase involved in endoplasmic reticulum stress response pathway. Plays a critical role in protecting pancreatic beta-cells against oxidant stress, possibly by protecting the cell from excess buildup of reactive oxygen species (ROS). The polypeptide is Cytochrome b5 reductase 4 (CYB5R4) (Bos taurus (Bovine)).